The sequence spans 263 residues: Lens fiber major intrinsic protein (263 aa).

Residues 1–9 lie on the Cytoplasmic side of the membrane; the sequence is MWELRSASF. The helical transmembrane segment at 10–29 threads the bilayer; sequence WRAIFAEFFATLFYVFFGLG. Residues 30–41 lie on the Extracellular side of the membrane; that stretch reads ASLRWAPGPLHV. A helical transmembrane segment spans residues 42–59; the sequence is LQVALAFGLALATLVQAV. Residues 60-61 lie on the Cytoplasmic side of the membrane; that stretch reads GH. An intramembrane region (discontinuously helical) is located at residues 62-77; that stretch reads ISGAHVNPAVTFAFLV. The NPA 1 signature appears at 68–70; sequence NPA. Over 78-82 the chain is Cytoplasmic; that stretch reads GSQMS. A helical membrane pass occupies residues 83–106; sequence LLRAICYMAAQLLGAVAGAAVLYS. Residues 107–127 are Extracellular-facing; it reads VTPAAVRGNLALNTLHPGVSL. Residues 128-148 traverse the membrane as a helical segment; sequence GQATTVEIFLTLQFVLCIFAT. The Cytoplasmic segment spans residues 149-156; sequence YDERRNGR. The helical transmembrane segment at 157 to 175 threads the bilayer; sequence LGSVALAVGFSLTLGHLFG. Residues 176 to 178 lie on the Extracellular side of the membrane; the sequence is MYY. The segment at residues 179–193 is an intramembrane region (discontinuously helical); it reads TGAGMNPARSFAPAI. The short motif at 184–186 is the NPA 2 element; it reads NPA. Topologically, residues 194 to 200 are extracellular; sequence LTRNFTN. A helical transmembrane segment spans residues 201 to 222; the sequence is HWVYWVGPIIGGGLASLLYDFL. At 223-263 the chain is on the cytoplasmic side; that stretch reads LFPRLKSVSERLSILKGARPSDSNGQPEGTGEPVELKTQAL. The segment at 227 to 237 is interaction with CALM; sequence LKSVSERLSIL. Residues S235, S243, and S245 each carry the phosphoserine modification. The segment at 240–263 is disordered; it reads ARPSDSNGQPEGTGEPVELKTQAL. N246 is modified (deamidated asparagine).

It belongs to the MIP/aquaporin (TC 1.A.8) family. In terms of assembly, homotetramer; each monomer provides an independent water pore. Two homotetramers on opposing membranes can dimerize, forming a cell-cell junction. Interacts with CALM; the calcium-calmodulin/CALM complex interacts with the cytoplasmic domains of two aquaporins, leading to channel closure. Interacts with BFSP1 (via C-terminus); prevents calcium-dependent inhibition of the water channel activity. Subject to partial proteolytic cleavage in the eye lens core. Partial proteolysis promotes interactions between tetramers from adjoining membranes. In terms of processing, fatty acylated at Met-1 and Lys-238. The acyl modifications, in decreasing order of ion abundance, are: oleoyl (C18:1) &gt; palmitoyl (C16:0) &gt; stearoyl (C18:0) &gt; eicosenoyl (C20:1) &gt; dihomo-gamma-linolenoyl (C20:3) &gt; palmitoleoyl (C16:1) &gt; eicosadienoyl (C20:2).

Its subcellular location is the cell membrane. It is found in the cell junction. The catalysed reaction is H2O(in) = H2O(out). With respect to regulation, the water channel activity is inhibited by calcium through calmodulin/CALM. Its function is as follows. Aquaporins form homotetrameric transmembrane channels, with each monomer independently mediating water transport across the plasma membrane along its osmotic gradient. Specifically expressed in lens fiber cells, this aquaporin is crucial for maintaining lens water homeostasis and transparency. Beyond water permeability, it also acts as a cell-to-cell adhesion molecule, forming thin junctions between lens fiber cells that are essential for maintaining the ordered structure and transparency of the lens. The polypeptide is Lens fiber major intrinsic protein (Oryctolagus cuniculus (Rabbit)).